A 609-amino-acid chain; its full sequence is Membrane protein insertase YidC (609 aa).

The next 5 helical transmembrane spans lie at 8–28, 381–401, 451–471, 509–529, and 545–565; these read LILATALSFLVILVWFILFPP, MGWSIIGLTLIIKAIVFPLAL, LPILLQIPIFFSLYKVIFVTI, SLTATILIGILPLLLGISMWL, and IFAWMPWVFMFMLGSFASGLV.

This sequence belongs to the OXA1/ALB3/YidC family. Type 1 subfamily. In terms of assembly, interacts with the Sec translocase complex via SecD. Specifically interacts with transmembrane segments of nascent integral membrane proteins during membrane integration.

The protein localises to the cell inner membrane. Its function is as follows. Required for the insertion and/or proper folding and/or complex formation of integral membrane proteins into the membrane. Involved in integration of membrane proteins that insert both dependently and independently of the Sec translocase complex, as well as at least some lipoproteins. Aids folding of multispanning membrane proteins. This is Membrane protein insertase YidC from Ruegeria pomeroyi (strain ATCC 700808 / DSM 15171 / DSS-3) (Silicibacter pomeroyi).